The following is a 295-amino-acid chain: Phosphoserine phosphatase, chloroplastic (295 aa).

The N-terminal 54 residues, 1-54 (MEALTTSRVVPVQVPCRKLSSLFANFSCLELRRYPCRGLVSIMNHPKLLRPVTA), are a transit peptide targeting the chloroplast. Aspartate 89 functions as the Nucleophile in the catalytic mechanism. 2 residues coordinate Mg(2+): aspartate 89 and aspartate 91. The Proton donor role is filled by aspartate 91. Substrate is bound by residues glutamate 98, arginine 134, 178-179 (SG), and lysine 227. Mg(2+) is bound at residue aspartate 248.

It belongs to the HAD-like hydrolase superfamily. SerB family. It depends on Mg(2+) as a cofactor. In terms of tissue distribution, ubiquitous. Mainly expressed in shoot and root meristems, vasculature, pollen, anthers, carpels and seeds.

It is found in the plastid. The protein localises to the chloroplast. The catalysed reaction is O-phospho-L-serine + H2O = L-serine + phosphate. It catalyses the reaction O-phospho-D-serine + H2O = D-serine + phosphate. Its pathway is amino-acid biosynthesis; L-serine biosynthesis; L-serine from 3-phospho-D-glycerate: step 3/3. Its activity is regulated as follows. Approximately 60% inhibition of PSP activity is observed in presence of 10 mM serine. Its function is as follows. Catalyzes the last step in the plastidial phosphorylated pathway of serine biosynthesis (PPSB). The reaction mechanism proceeds via the formation of a phosphoryl-enzyme intermediates. Required for embryo, pollen and root development. May be required preferentially for serine biosynthesis in non-photosynthetic tissues. The protein is Phosphoserine phosphatase, chloroplastic (PSP) of Arabidopsis thaliana (Mouse-ear cress).